Reading from the N-terminus, the 216-residue chain is Elongation factor Ts (216 aa).

The involved in Mg(2+) ion dislocation from EF-Tu stretch occupies residues 81–84 (TDFV).

This sequence belongs to the EF-Ts family.

The protein localises to the cytoplasm. In terms of biological role, associates with the EF-Tu.GDP complex and induces the exchange of GDP to GTP. It remains bound to the aminoacyl-tRNA.EF-Tu.GTP complex up to the GTP hydrolysis stage on the ribosome. The polypeptide is Elongation factor Ts (Geobacter metallireducens (strain ATCC 53774 / DSM 7210 / GS-15)).